The primary structure comprises 440 residues: C4-dicarboxylate TRAP transporter large permease protein DctM (440 aa).

13 consecutive transmembrane segments (helical) span residues 4–24 (LIIF…SISL), 54–74 (FEIM…HGGV), 89–109 (WHGG…AVSG), 112–132 (PATV…QGFP), 148–168 (ILIP…GMVV), 181–201 (VGEL…FLAF), 230–250 (AAWG…GIFT), 255–275 (AAMS…DLTL), 291–311 (MLLY…HEGI), 318–338 (WMVN…ILLL), 349–369 (IVLI…IDPV), 370–390 (HFGI…PVGL), and 410–430 (VWPW…VPAI).

The protein belongs to the TRAP transporter large permease family. As to quaternary structure, the complex comprises the extracytoplasmic solute receptor protein DctP, and the two transmembrane proteins DctQ and DctM.

It is found in the cell inner membrane. Functionally, part of the tripartite ATP-independent periplasmic (TRAP) transport system DctPQM involved in C4-dicarboxylates uptake. This chain is C4-dicarboxylate TRAP transporter large permease protein DctM, found in Rhodobacter capsulatus (Rhodopseudomonas capsulata).